The following is a 418-amino-acid chain: Caveolae-associated protein 2 (418 aa).

Residues 1–42 (MGEDAAQAEKFQHPNTDMLQEKPSSPSPMPSSTPSPSLNLGS) are disordered. At glycine 2 the chain carries N-acetylglycine. The interval 2–168 (GEDAAQAEKF…IFQEESEIPA (167 aa)) is interaction with CAVIN1. Phosphoserine occurs at positions 27, 35, 37, and 51. 2 coiled-coil regions span residues 61–87 (LLDKLVNMLDAVRENQHNMEQRQINLE) and 126–268 (RAVR…VERR). A leucine-zipper region spans residues 62–100 (LDKLVNMLDAVRENQHNMEQRQINLEGSVKGIQNDLTKL). Threonine 196 bears the Phosphothreonine mark. 2 disordered regions span residues 200 to 238 (VDLSSDDELPRDEEALEDSAEEKMEESRAEKIKRSSLKK) and 262 to 382 (IVSV…ALQQ). 3 positions are modified to phosphoserine: serine 203, serine 204, and serine 218. Positions 203-219 (SSDDELPRDEEALEDSA) are enriched in acidic residues. Residues 220–238 (EEKMEESRAEKIKRSSLKK) are compositionally biased toward basic and acidic residues. Residues 275–287 (LTPNHQKASSGKS) are compositionally biased toward polar residues. Phosphoserine is present on residues serine 283, serine 284, serine 287, serine 288, serine 293, and serine 296. The segment covering 303-321 (REGESSVENETKLEDQMQE) has biased composition (basic and acidic residues). A phosphoserine mark is found at serine 327, serine 336, serine 359, and serine 363. Polar residues predominate over residues 355–366 (RGNNSAVGSNAD). At threonine 368 the chain carries Phosphothreonine. Positions 368 to 377 (TIEEDEEEEP) are enriched in acidic residues. Tyrosine 388 carries the phosphotyrosine modification. Phosphoserine occurs at positions 390 and 396. The segment at 396–418 (SEEMEEPSEKQVQPAVLHVDQTA) is disordered.

It belongs to the CAVIN family. As to quaternary structure, component of the CAVIN complex composed of CAVIN1, CAVIN2, CAVIN3 and CAVIN4. Binds to PRKCA in the presence of phosphatidylserine. Interacts with CAVIN4; this augments the transactivation of NPPA by CAVIN4. Interacts with CAVIN1. Interacts with CAV3. Post-translationally, the N-terminus is blocked. As to expression, heart, adipose tissue, lung and endothelial cells (at protein level). Highly expressed in kidney and expressed at lower levels in liver, spleen, thymus, stomach, intestine and uterus.

The protein localises to the cytoplasm. It localises to the cytosol. The protein resides in the membrane. Its subcellular location is the caveola. Functionally, plays an important role in caveolar biogenesis and morphology. Regulates caveolae morphology by inducing membrane curvature within caveolae. Plays a role in caveola formation in a tissue-specific manner. Required for the formation of caveolae in the lung and fat endothelia but not in the heart endothelia. Negatively regulates the size or stability of CAVIN complexes in the lung endothelial cells. May play a role in targeting PRKCA to caveolae. The protein is Caveolae-associated protein 2 (Cavin2) of Mus musculus (Mouse).